The following is a 429-amino-acid chain: Protein phosphatase 2C homolog 2 (429 aa).

Positions 16–291 (LYGLSAMQGW…DNMTMIIIGL (276 aa)) constitute a PPM-type phosphatase domain. Mn(2+)-binding residues include D64, G65, D233, and D282. 2 disordered regions span residues 320-348 (YGKS…NDRS) and 384-429 (RDVT…SASS). The span at 384-397 (RDVTNHLQHDKAEE) shows a compositional bias: basic and acidic residues. Over residues 405 to 419 (SESPSSANKNSSGSG) the composition is skewed to low complexity.

This sequence belongs to the PP2C family. It depends on Mg(2+) as a cofactor. Requires Mn(2+) as cofactor.

The protein localises to the cytoplasm. It localises to the nucleus. The enzyme catalyses O-phospho-L-seryl-[protein] + H2O = L-seryl-[protein] + phosphate. It carries out the reaction O-phospho-L-threonyl-[protein] + H2O = L-threonyl-[protein] + phosphate. Dephosphorylating regulator for many key proteins. Dephosphorylates sakA, to negatively regulate the stress-activated p38MAPK cascade. The chain is Protein phosphatase 2C homolog 2 from Aspergillus fumigatus (strain ATCC MYA-4609 / CBS 101355 / FGSC A1100 / Af293) (Neosartorya fumigata).